The chain runs to 236 residues: Large ribosomal subunit protein uL1 (236 aa).

The protein belongs to the universal ribosomal protein uL1 family. As to quaternary structure, part of the 50S ribosomal subunit.

Binds directly to 23S rRNA. The L1 stalk is quite mobile in the ribosome, and is involved in E site tRNA release. In terms of biological role, protein L1 is also a translational repressor protein, it controls the translation of the L11 operon by binding to its mRNA. The polypeptide is Large ribosomal subunit protein uL1 (Sorangium cellulosum (strain So ce56) (Polyangium cellulosum (strain So ce56))).